Here is a 133-residue protein sequence, read N- to C-terminus: Osteocrin (133 aa).

An N-terminal signal peptide occupies residues 1–27 (MLDWRLASAHFILAVTLTLWSSGKVLS). R132 bears the Arginine amide mark.

Belongs to the Osteocrin family. As to quaternary structure, interacts with NPR3. In terms of tissue distribution, enriched in neocortical regions of the developing cerebral cortex. Not expressed in other compartments of the neocortical wall or in brain regions such as the hippocampus, striatum, mediodorsal nucleus of the thalamus and cerebellum. Also expressed in bone. In developing neonatal rib bone, present at high level in osteoblasts on bone-forming surfaces, in newly incorporated osteocytes and in some late hypertrophic chondrocytes (at protein level). In adult bone, localizes specifically to osteoblasts and young osteocytes at bone-forming sites (at protein level).

Its subcellular location is the secreted. Its function is as follows. Hormone that acts as a regulator of dendritic growth in the developing cerebral cortex in response to sensory experience. Induced in the brain following membrane depolarization and inhibits dendritic branching in neurons of the developing cortex. Probably acts by binding to natriuretic peptide receptor NPR3/NPR-C, thereby preventing binding between NPR3/NPR-C and natriuretic peptides, leading to increase cGMP production. The sequence is that of Osteocrin from Homo sapiens (Human).